Reading from the N-terminus, the 323-residue chain is Leucine-rich repeat-containing protein 46 (323 aa).

4 LRR repeats span residues D49–R70, N71–T92, S93–Q114, and Y115–P135. One can recognise an LRRCT domain in the interval N146–E188. T178 is subject to Phosphothreonine. 3 positions are modified to phosphoserine: S179, S185, and S186. A coiled-coil region spans residues R203–H228. The segment at D252–K323 is disordered. A compositionally biased stretch (polar residues) spans A269–S290. The span at A297 to A310 shows a compositional bias: low complexity. S303 carries the post-translational modification Phosphoserine.

It is found in the cell projection. The protein localises to the cilium. It localises to the flagellum. In terms of biological role, required for normal spermatogenesis and male fertility. Plays an important role in sperm flagellum biogenesis. This is Leucine-rich repeat-containing protein 46 (Lrrc46) from Rattus norvegicus (Rat).